A 169-amino-acid chain; its full sequence is Large ribosomal subunit protein uL5 (169 aa).

The protein belongs to the universal ribosomal protein uL5 family. As to quaternary structure, part of the 50S ribosomal subunit; contacts the 5S rRNA and probably tRNA. Forms a bridge to the 30S subunit in the 70S ribosome.

In terms of biological role, this is one of the proteins that bind and probably mediate the attachment of the 5S RNA into the large ribosomal subunit, where it forms part of the central protuberance. In the 70S ribosome it contacts protein S13 of the 30S subunit (bridge B1b), connecting the 2 subunits; this bridge is implicated in subunit movement. May contact the P site tRNA; the 5S rRNA and some of its associated proteins might help stabilize positioning of ribosome-bound tRNAs. The sequence is that of Large ribosomal subunit protein uL5 from Cenarchaeum symbiosum (strain A).